The sequence spans 385 residues: V-type proton ATPase subunit C (385 aa).

It belongs to the V-ATPase C subunit family. V-ATPase is a heteromultimeric enzyme made up of two complexes: the ATP-hydrolytic V1 complex and the proton translocation V0 complex. The V1 complex consists of three catalytic AB heterodimers that form a heterohexamer, three peripheral stalks each consisting of EG heterodimers, one central rotor including subunits D and F, and the regulatory subunits C and H. The proton translocation complex V0 consists of the proton transport subunit a, a ring of proteolipid subunits c9c'', rotary subunit d, subunits e and f, and the accessory subunits VhaAC45 and ATP6AP2.

In terms of biological role, subunit of the V1 complex of vacuolar(H+)-ATPase (V-ATPase), a multisubunit enzyme composed of a peripheral complex (V1) that hydrolyzes ATP and a membrane integral complex (V0) that translocates protons. V-ATPase is responsible for acidifying and maintaining the pH of intracellular compartments and in some cell types, is targeted to the plasma membrane, where it is responsible for acidifying the extracellular environment. Subunit C is necessary for the assembly of the catalytic sector of the enzyme and is likely to have a specific function in its catalytic activity. The polypeptide is V-type proton ATPase subunit C (Manduca sexta (Tobacco hawkmoth)).